A 154-amino-acid polypeptide reads, in one-letter code: PTTG1IP family member 2 (154 aa).

Residues methionine 1–serine 26 form the signal peptide. At phenylalanine 27 to aspartate 97 the chain is on the extracellular side. The chain crosses the membrane as a helical span at residues methionine 98–cysteine 118. The Cytoplasmic portion of the chain corresponds to cysteine 119 to glutamate 154.

It localises to the membrane. This Homo sapiens (Human) protein is PTTG1IP family member 2.